A 491-amino-acid chain; its full sequence is Cysteine--tRNA ligase (491 aa).

C31 serves as a coordination point for Zn(2+). Positions 33–43 (PTVYGDAHLGH) match the 'HIGH' region motif. Residues C226, H251, and E255 each contribute to the Zn(2+) site. A 'KMSKS' region motif is present at residues 283 to 287 (KMGKS). K286 is a binding site for ATP.

It belongs to the class-I aminoacyl-tRNA synthetase family. Monomer. Requires Zn(2+) as cofactor.

Its subcellular location is the cytoplasm. The catalysed reaction is tRNA(Cys) + L-cysteine + ATP = L-cysteinyl-tRNA(Cys) + AMP + diphosphate. This Parabacteroides distasonis (strain ATCC 8503 / DSM 20701 / CIP 104284 / JCM 5825 / NCTC 11152) protein is Cysteine--tRNA ligase.